The following is a 525-amino-acid chain: GMP synthase [glutamine-hydrolyzing] (525 aa).

In terms of domain architecture, Glutamine amidotransferase type-1 spans 9-207 (RILILDFGSQ…VLGICGCEAL (199 aa)). Residue Cys86 is the Nucleophile of the active site. Catalysis depends on residues His181 and Glu183. The 193-residue stretch at 208–400 (WTSATIIEDA…LGLPYDMLYR (193 aa)) folds into the GMPS ATP-PPase domain. 235–241 (SGGVDSS) contributes to the ATP binding site.

Homodimer.

The enzyme catalyses XMP + L-glutamine + ATP + H2O = GMP + L-glutamate + AMP + diphosphate + 2 H(+). It participates in purine metabolism; GMP biosynthesis; GMP from XMP (L-Gln route): step 1/1. In terms of biological role, catalyzes the synthesis of GMP from XMP. The sequence is that of GMP synthase [glutamine-hydrolyzing] from Yersinia pseudotuberculosis serotype IB (strain PB1/+).